The following is a 365-amino-acid chain: MMGSVLPAEALVLKTGLKAPGLALAEVITSDILHSFLYGRWRNVLGEQLLEDKSHHASPKTAFTAEVLAQSFSGEVQKLSSLVLPVEVIIAQSSIPGEGLGIFSKTWIKAGTEMGPFTGRVIAPEHVDICKNNNLMWEVFNEDGTVRYFIDASQEDHRSWMTYIKCARNEQEQNLEVVQIGTSIFYKAIEMIPPDQELLVWYGNSHNTFLGIPGVPGLEEEQKKNKHEDFHPADSATGTAGRMRCVICHRGFNSRSNLRSHMRIHTLDKPFVCRFCNRRFSQSSTLRNHVRLHTGERPYKCQVCQSAYSQLAGLRAHQKSARHRPPSTALQAHSPALPAPHAHAPALAAAAAAAAAAHHLPAMVL.

The 118-residue stretch at 86–203 folds into the SET domain; the sequence is VEVIIAQSSI…PDQELLVWYG (118 aa). 3 consecutive C2H2-type zinc fingers follow at residues 243–265, 271–293, and 299–323; these read MRCV…MRIH, FVCR…VRLH, and YKCQ…SARH. The interval 318 to 338 is disordered; that stretch reads QKSARHRPPSTALQAHSPALP. Low complexity predominate over residues 329 to 338; sequence ALQAHSPALP.

The protein belongs to the class V-like SAM-binding methyltransferase superfamily. In terms of assembly, interacts with EHMT2.

The protein resides in the nucleus. Transcriptional regulator necessary for the development of nociceptive neurons, playing a key role in determining the nociceptive lineage from neural crest cell progenitors. Initiates neurogenesis and activates downstream pro-neuronal transcription factors, such as NEUROD1, BRN3A, and ISL1, specifically within nociceptive neurons, while repressing non-nociceptor cell fates. Essential for the proper function of nociceptors in adults, influencing both their excitability and their gene expression, thereby impacting how these neurons respond to various pain stimuli. The chain is PR domain zinc finger protein 12 (Prdm12) from Mus musculus (Mouse).